The chain runs to 200 residues: MAKVLVLYYSSYGHVETMAQHIVEGAKSVPGVEVTLKRVPETIPVDQARAIGVKVDQAAPVATVDELADYDAIIFGTPTRFGNMAGQMRTFLDQTGGLWMKGALVGKIGSVFASTGTQHGGQETTITSFHTTLLHHGMVIVGVPYACSGLVNMSEITGGTPYGATTLAGADGSRQPSANELDIARYQGKHVAELASKLAS.

The Flavodoxin-like domain occupies 4-191; that stretch reads VLVLYYSSYG…DIARYQGKHV (188 aa). Residues 10–15 and 79–81 each bind FMN; these read SSYGHV and TRF. Residue Tyr12 coordinates NAD(+). Trp99 provides a ligand contact to substrate. FMN is bound by residues 114-120 and His135; that span reads STGTQHG.

This sequence belongs to the WrbA family. The cofactor is FMN.

It catalyses the reaction a quinone + NADH + H(+) = a quinol + NAD(+). The enzyme catalyses a quinone + NADPH + H(+) = a quinol + NADP(+). The protein is NAD(P)H dehydrogenase (quinone) of Burkholderia cenocepacia (strain HI2424).